The sequence spans 299 residues: Elongation factor Ts (299 aa).

The involved in Mg(2+) ion dislocation from EF-Tu stretch occupies residues 82-85; the sequence is TDFV.

This sequence belongs to the EF-Ts family.

Its subcellular location is the cytoplasm. Associates with the EF-Tu.GDP complex and induces the exchange of GDP to GTP. It remains bound to the aminoacyl-tRNA.EF-Tu.GTP complex up to the GTP hydrolysis stage on the ribosome. In Dechloromonas aromatica (strain RCB), this protein is Elongation factor Ts.